The chain runs to 308 residues: Ribosomal RNA small subunit methyltransferase H (308 aa).

Residues 33–35, Asp-52, Tyr-81, Asp-99, and Gln-106 contribute to the S-adenosyl-L-methionine site; that span reads GGH.

It belongs to the methyltransferase superfamily. RsmH family.

The protein localises to the cytoplasm. It catalyses the reaction cytidine(1402) in 16S rRNA + S-adenosyl-L-methionine = N(4)-methylcytidine(1402) in 16S rRNA + S-adenosyl-L-homocysteine + H(+). Functionally, specifically methylates the N4 position of cytidine in position 1402 (C1402) of 16S rRNA. This chain is Ribosomal RNA small subunit methyltransferase H, found in Francisella philomiragia subsp. philomiragia (strain ATCC 25017 / CCUG 19701 / FSC 153 / O#319-036).